The sequence spans 64 residues: UPF0337 protein SH2043 (64 aa).

The interval 1 to 64 is disordered; sequence MAEDKFEQAK…DKVKGNNDNK (64 aa). Over residues 22 to 64 the composition is skewed to basic and acidic residues; that stretch reads DNKDLEKEGQNDKASGKAKEAVENVKNKANDLIDKVKGNNDNK.

Belongs to the UPF0337 (CsbD) family.

The sequence is that of UPF0337 protein SH2043 from Staphylococcus haemolyticus (strain JCSC1435).